Here is a 176-residue protein sequence, read N- to C-terminus: Ribosome maturation factor RimM (176 aa).

The PRC barrel domain maps to 93–172 (KDEFFYFDII…KIQVKNSLDI (80 aa)).

Belongs to the RimM family. As to quaternary structure, binds ribosomal protein uS19.

The protein resides in the cytoplasm. An accessory protein needed during the final step in the assembly of 30S ribosomal subunit, possibly for assembly of the head region. Essential for efficient processing of 16S rRNA. May be needed both before and after RbfA during the maturation of 16S rRNA. It has affinity for free ribosomal 30S subunits but not for 70S ribosomes. The chain is Ribosome maturation factor RimM from Campylobacter fetus subsp. fetus (strain 82-40).